The following is a 221-amino-acid chain: Adenylate kinase (221 aa).

10-15 (GAGKGT) provides a ligand contact to ATP. The segment at 30–59 (STGDMLRAAVKAGTPLGLEAKRFMDAGELV) is NMP. Residues Thr31, Arg36, 57-59 (ELV), 85-88 (GFPR), and Gln92 each bind AMP. Residues 122 to 159 (GRRSHAASGRTYHVKFNPPKVEGLDDVTGEPLIQRDDD) are LID. ATP contacts are provided by residues Arg123 and 132–133 (TY). Residues Arg156 and Arg167 each contribute to the AMP site. Gly207 lines the ATP pocket.

This sequence belongs to the adenylate kinase family. Monomer.

The protein resides in the cytoplasm. The enzyme catalyses AMP + ATP = 2 ADP. It functions in the pathway purine metabolism; AMP biosynthesis via salvage pathway; AMP from ADP: step 1/1. In terms of biological role, catalyzes the reversible transfer of the terminal phosphate group between ATP and AMP. Plays an important role in cellular energy homeostasis and in adenine nucleotide metabolism. In Paraburkholderia xenovorans (strain LB400), this protein is Adenylate kinase.